The chain runs to 202 residues: Superoxide dismutase [Mn/Fe] (202 aa).

Histidine 27, histidine 81, aspartate 163, and histidine 167 together coordinate Fe(3+). Residues histidine 27, histidine 81, aspartate 163, and histidine 167 each contribute to the Mn(2+) site.

This sequence belongs to the iron/manganese superoxide dismutase family. Requires Mn(2+) as cofactor. Fe(3+) serves as cofactor.

It carries out the reaction 2 superoxide + 2 H(+) = H2O2 + O2. Destroys superoxide anion radicals which are normally produced within the cells and which are toxic to biological systems. Catalyzes the dismutation of superoxide anion radicals into O2 and H2O2 by successive reduction and oxidation of the transition metal ion at the active site. This is Superoxide dismutase [Mn/Fe] (sodA) from Streptococcus agalactiae serotype V (strain ATCC BAA-611 / 2603 V/R).